We begin with the raw amino-acid sequence, 210 residues long: MTGLFITLEGPEGAGKSTNRDYLAAQLRAQGVQVLLTREPGGTPLAERIRELLLAPSDEGMSADTELLLVFAARAQHLAEVIRPALARGEVVLCDRFTDATYAYQGGGRGLSHERIAALEQFVQGDLRPDLTLVFDLPVEIGLSRAAARGRLDRFEQEGRAFFDAVRSTYLNRAKAEPARYRLVDAAQSLADVQASLDKLLPELLELQRG.

10–17 (GPEGAGKS) provides a ligand contact to ATP.

The protein belongs to the thymidylate kinase family.

The enzyme catalyses dTMP + ATP = dTDP + ADP. Phosphorylation of dTMP to form dTDP in both de novo and salvage pathways of dTTP synthesis. This Pseudomonas syringae pv. tomato (strain ATCC BAA-871 / DC3000) protein is Thymidylate kinase.